The primary structure comprises 399 residues: CLOCK-interacting pacemaker (399 aa).

The span at 1 to 12 (MERKNSSRESPR) shows a compositional bias: basic and acidic residues. 2 disordered regions span residues 1–85 (MERK…AKNA) and 159–224 (SYTK…KLAE). At S213 the chain carries Phosphoserine. Residues 333–359 (TLKTKELIRQNQATQVELDQLKEQTQL) adopt a coiled-coil conformation. Positions 378 to 388 (SLTPGSSNTGS) are enriched in polar residues. A disordered region spans residues 378–399 (SLTPGSSNTGSDLEAFSDHPDI).

In terms of assembly, interacts with CLOCK. Forms a ternary complex with the CLOCK-BMAL1 heterodimer. Interacts with CAD and HSPA5.

The protein localises to the nucleus. It localises to the cytoplasm. It is found in the cytosol. Transcriptional repressor which may act as a negative-feedback regulator of CLOCK-BMAL1 transcriptional activity in the circadian-clock mechanism. May stimulate BMAL1-dependent phosphorylation of CLOCK. However, the physiological relevance of these observations is unsure, since experiments in knockout mice showed that CIPC is not critially required for basic circadian clock. The sequence is that of CLOCK-interacting pacemaker (CIPC) from Pongo abelii (Sumatran orangutan).